We begin with the raw amino-acid sequence, 298 residues long: ADP-ribosyl cyclase/cyclic ADP-ribose hydrolase 1 (298 aa).

Over 1–21 the chain is Cytoplasmic; sequence MPDYEFSPASGDRPRSWISKQ. A helical; Signal-anchor for type II membrane protein membrane pass occupies residues 22-42; sequence VLIVLGVCLPVILALAIWVGV. Residues 43–298 lie on the Extracellular side of the membrane; the sequence is LTWRQSSMGA…PEHPSCSVLM (256 aa). 3 disulfide bridges follow: Cys64-Cys80, Cys97-Cys178, and Cys158-Cys171. A glycan (N-linked (GlcNAc...) asparagine) is linked at Asn98. Residue Cys117 is part of the active site. N-linked (GlcNAc...) asparagine glycosylation occurs at Asn118. N-linked (GlcNAc...) asparagine glycosylation occurs at Asn177. The active site involves Cys199. N-linked (GlcNAc...) asparagine glycosylation is found at Asn207 and Asn268. 2 disulfide bridges follow: Cys252-Cys273 and Cys285-Cys294.

The protein belongs to the ADP-ribosyl cyclase family. As to quaternary structure, homodimer. In terms of tissue distribution, osteoclasts.

It is found in the cell membrane. The protein localises to the microsome membrane. It localises to the endoplasmic reticulum membrane. It catalyses the reaction NAD(+) = cyclic ADP-beta-D-ribose + nicotinamide + H(+). The enzyme catalyses 2'-phospho-cyclic ADP-ribose + nicotinate = nicotinate-adenine dinucleotide phosphate. The catalysed reaction is NAD(+) + H2O = ADP-D-ribose + nicotinamide + H(+). It carries out the reaction nicotinate + NADP(+) = nicotinate-adenine dinucleotide phosphate + nicotinamide. In terms of biological role, synthesizes cyclic ADP-ribose (cADPR), a second messenger for glucose-induced insulin secretion. Synthesizes the Ca(2+) mobilizer nicotinate-adenine dinucleotide phosphate, NAADP(+), from 2'-phospho-cADPR and nicotinic acid, as well as from NADP(+) and nicotinic acid. Also has cADPR hydrolase activity. The polypeptide is ADP-ribosyl cyclase/cyclic ADP-ribose hydrolase 1 (CD38) (Oryctolagus cuniculus (Rabbit)).